The sequence spans 211 residues: tRNA (guanine-N(7)-)-methyltransferase (211 aa).

S-adenosyl-L-methionine is bound by residues aspartate 40, glutamate 65, asparagine 92, and aspartate 118. The active site involves aspartate 118. Substrate-binding residues include lysine 122 and aspartate 154.

It belongs to the class I-like SAM-binding methyltransferase superfamily. TrmB family.

It catalyses the reaction guanosine(46) in tRNA + S-adenosyl-L-methionine = N(7)-methylguanosine(46) in tRNA + S-adenosyl-L-homocysteine. It functions in the pathway tRNA modification; N(7)-methylguanine-tRNA biosynthesis. Functionally, catalyzes the formation of N(7)-methylguanine at position 46 (m7G46) in tRNA. The protein is tRNA (guanine-N(7)-)-methyltransferase of Microcystis aeruginosa (strain NIES-843 / IAM M-2473).